The following is a 483-amino-acid chain: WAS/WASL-interacting protein family member 3 (483 aa).

Residues 1 to 29 show a composition bias toward pro residues; that stretch reads MPVPPPPPPPLPPPPPPLGAPPPPPPSAP. Positions 1–414 are disordered; the sequence is MPVPPPPPPP…GGQLRNGSLH (414 aa). Short sequence motifs (profilin-binding motif) lie at residues 3–8, 11–16, and 20–25; these read VPPPPP, LPPPPP, and APPPPP. In terms of domain architecture, WH2 spans 45-62; that stretch reads GRSALLADIQQGTRLRKV. An Asymmetric dimethylarginine modification is found at Arg-46. The RLRK signature appears at 58-61; that stretch reads RLRK. Composition is skewed to polar residues over residues 63–78 and 87–96; these read TQIN…SSKG and ANTRGASTPP. Ser-149 bears the Phosphoserine mark. Positions 166 to 192 are enriched in pro residues; sequence PPRPNVPAPPPPTPPPPPPPLPPPLPS. Residue Ser-202 is modified to Phosphoserine. 2 stretches are compositionally biased toward pro residues: residues 215–239 and 256–271; these read VAPP…PLPP and HLPP…PPCG. Positions 277-288 are enriched in low complexity; it reads AEPASPAQDAQE. Positions 289–298 are enriched in pro residues; that stretch reads PPAPPPPLPP. Low complexity-rich tracts occupy residues 299–308 and 331–345; these read YASCSPRASL and PSFQ…AQAL. Ser-383 is subject to Phosphoserine. Low complexity predominate over residues 393–404; the sequence is QQATAWTPTQQP. Positions 424–448 match the WASP-binding motif motif; the sequence is TFHSVEDFPPPDEYKPCQKIYPSKI. A disordered region spans residues 461–483; sequence EAVGQSSDDIKGRNSQLSLKTLR. Residues 473–483 show a composition bias toward polar residues; it reads RNSQLSLKTLR.

This sequence belongs to the verprolin family. As to quaternary structure, interacts with WASL, and monomeric and filamentous actin.

It is found in the cytoplasm. In terms of biological role, may be a regulator of cytoskeletal organization. May have a role in spermatogenesis. The protein is WAS/WASL-interacting protein family member 3 (WIPF3) of Homo sapiens (Human).